The chain runs to 154 residues: Cytochrome c-550 (154 aa).

The signal sequence occupies residues methionine 1 to alanine 20. Glutamine 21 carries the post-translational modification Pyrrolidone carboxylic acid. The heme c site is built by cysteine 35, cysteine 38, histidine 39, and methionine 120. Positions glutamate 150–asparagine 154 are excised as a propeptide.

Binds 1 heme c group covalently per subunit.

This Paracoccus versutus (Thiobacillus versutus) protein is Cytochrome c-550 (cyc).